We begin with the raw amino-acid sequence, 25 residues long: Caerin 1.1 (25 aa).

Residue leucine 25 is modified to Leucine amide.

As to expression, expressed by the skin dorsal glands.

The protein resides in the secreted. Its function is as follows. Antibacterial peptide with wide spectrum of activity. Active against the Gram-positive bacteria B.cereus (MIC=50 ug/ml), E.faecalis (MIC=25 ug/ml), L.lactis (MIC=1.5 ug/ml), L.innocua (MIC=25 ug/ml), S.aureus (MIC=3 ug/ml), S.epidermidis (MIC=12 ug/ml) and S.uberis (MIC=12 ug/ml), and against the Gram-negative bacteria E.coli (MIC=100 ug/ml) and P.multocida (MIC=25 ug/ml). The sequence is that of Caerin 1.1 from Litoria peronii (Emerald spotted tree frog).